Consider the following 811-residue polypeptide: Glycerol-3-phosphate acyltransferase (811 aa).

An HXXXXD motif motif is present at residues 303-308; that stretch reads HRSHMD.

Belongs to the GPAT/DAPAT family.

It localises to the cell inner membrane. The catalysed reaction is sn-glycerol 3-phosphate + an acyl-CoA = a 1-acyl-sn-glycero-3-phosphate + CoA. It functions in the pathway phospholipid metabolism; CDP-diacylglycerol biosynthesis; CDP-diacylglycerol from sn-glycerol 3-phosphate: step 1/3. In Haemophilus ducreyi (strain 35000HP / ATCC 700724), this protein is Glycerol-3-phosphate acyltransferase.